Reading from the N-terminus, the 352-residue chain is Cyclin-dependent kinase-like 1 (352 aa).

The Protein kinase domain maps to 4 to 287 (YEKIGKIGEG…CEQLLQHPYF (284 aa)). ATP-binding positions include 10–18 (IGEGSYGVV) and K33. The [NKR]KIAxRE motif lies at 45-51 (KKIALRE). Residue D126 is the Proton acceptor of the active site.

Belongs to the protein kinase superfamily. CMGC Ser/Thr protein kinase family. CDC2/CDKX subfamily.

Its subcellular location is the cytoplasm. It is found in the nucleus. The enzyme catalyses L-seryl-[protein] + ATP = O-phospho-L-seryl-[protein] + ADP + H(+). The catalysed reaction is L-threonyl-[protein] + ATP = O-phospho-L-threonyl-[protein] + ADP + H(+). This is Cyclin-dependent kinase-like 1 from Mus musculus (Mouse).